A 468-amino-acid polypeptide reads, in one-letter code: ATP synthase subunit beta (468 aa).

155 to 162 (GGAGVGKT) contributes to the ATP binding site.

Belongs to the ATPase alpha/beta chains family. As to quaternary structure, F-type ATPases have 2 components, CF(1) - the catalytic core - and CF(0) - the membrane proton channel. CF(1) has five subunits: alpha(3), beta(3), gamma(1), delta(1), epsilon(1). CF(0) has three main subunits: a(1), b(2) and c(9-12). The alpha and beta chains form an alternating ring which encloses part of the gamma chain. CF(1) is attached to CF(0) by a central stalk formed by the gamma and epsilon chains, while a peripheral stalk is formed by the delta and b chains.

The protein resides in the cell membrane. The enzyme catalyses ATP + H2O + 4 H(+)(in) = ADP + phosphate + 5 H(+)(out). Produces ATP from ADP in the presence of a proton gradient across the membrane. The catalytic sites are hosted primarily by the beta subunits. The polypeptide is ATP synthase subunit beta (Streptococcus thermophilus (strain CNRZ 1066)).